The primary structure comprises 163 residues: HTH-type transcriptional regulator IscR (163 aa).

The 130-residue stretch at 2–131 (RLTSKGRYAV…NNITLGELVN (130 aa)) folds into the HTH rrf2-type domain. The segment at residues 28–51 (LADISERQGISLSYLEQLFSRLRK) is a DNA-binding region (H-T-H motif). Residues C92, C98, and C104 each contribute to the [2Fe-2S] cluster site.

Requires [2Fe-2S] cluster as cofactor.

Its function is as follows. Regulates the transcription of several operons and genes involved in the biogenesis of Fe-S clusters and Fe-S-containing proteins. This is HTH-type transcriptional regulator IscR from Klebsiella pneumoniae (strain 342).